The primary structure comprises 270 residues: Putative phosphoenolpyruvate synthase regulatory protein (270 aa).

Position 150–157 (150–157 (GVSRCGKT)) interacts with ADP.

This sequence belongs to the pyruvate, phosphate/water dikinase regulatory protein family. PSRP subfamily.

The enzyme catalyses [pyruvate, water dikinase] + ADP = [pyruvate, water dikinase]-phosphate + AMP + H(+). The catalysed reaction is [pyruvate, water dikinase]-phosphate + phosphate + H(+) = [pyruvate, water dikinase] + diphosphate. Bifunctional serine/threonine kinase and phosphorylase involved in the regulation of the phosphoenolpyruvate synthase (PEPS) by catalyzing its phosphorylation/dephosphorylation. The protein is Putative phosphoenolpyruvate synthase regulatory protein of Shewanella baltica (strain OS223).